The chain runs to 172 residues: MTNYMFILSLLFLTGCLGLALKPSPIYGGLGLIVSGCIGCLMVLGFGGSFLGLMVFLIYLGGMLVVFGYTTAMATEEYPETWGSNWFIFSFFVLGLFMELVVFYLFSLNNKVELVDFDSLGDWLMYEIDDVGVMLEGGIGVAAIYSCATWMMVVAGWSLFAGIFIIIEITRD.

5 consecutive transmembrane segments (helical) span residues 1–21, 26–48, 52–74, 86–106, and 147–167; these read MTNY…GLAL, IYGG…GFGG, GLMV…TAMA, WFIF…FYLF, and CATW…FIII.

This sequence belongs to the complex I subunit 6 family. Core subunit of respiratory chain NADH dehydrogenase (Complex I) which is composed of 45 different subunits.

The protein localises to the mitochondrion inner membrane. It catalyses the reaction a ubiquinone + NADH + 5 H(+)(in) = a ubiquinol + NAD(+) + 4 H(+)(out). Its function is as follows. Core subunit of the mitochondrial membrane respiratory chain NADH dehydrogenase (Complex I) which catalyzes electron transfer from NADH through the respiratory chain, using ubiquinone as an electron acceptor. Essential for the catalytic activity and assembly of complex I. The polypeptide is NADH-ubiquinone oxidoreductase chain 6 (Rattus norvegicus (Rat)).